Reading from the N-terminus, the 386-residue chain is MRIGVGVCTTPDARQAAVEAAGQARDELAGEAPSLAVLLGSRAHTDRAADVLSAVLQMIDPPALVGCIAQAIVAGRHEIEDEPAVVVWLASGLAAETFQLDFVRTGSGALITGYRFDRTARDLHLLLPDPYTFPSNLLIEHPNTDLPGTAVVGGVVSGGRRRGDTRLFRDHDVLTSGVVGVRLPGMRGVPVVSQGCRPIGYPYIVTGADGILITELGGRPPLQRLREIVEGLSPDERALVSHGLQIGIVVDEHLAAPGQGDFVIRGLLGADPSTGSIEIDEVVQVGATMQFQVRDAAGADKDLRLTVERAAARLPGRAAGALLFTCNGRGRRMFGVADHDASTIEELLGGIPLAGFFAAGEIGPIAGRNALHGFTASMALFVDDME.

A run of 2 helical transmembrane segments spans residues 54–74 and 347–367; these read AVLQ…AIVA and LLGG…PIAG.

To M.tuberculosis Rv0628c.

It localises to the cell membrane. This is an uncharacterized protein from Mycobacterium tuberculosis (strain CDC 1551 / Oshkosh).